Consider the following 120-residue polypeptide: NADH-ubiquinone oxidoreductase chain 3 (120 aa).

3 consecutive transmembrane segments (helical) span residues 10 to 30 (ILIL…LGYF), 62 to 82 (FYLV…LFPF), and 89 to 109 (MTLF…IGFI).

It belongs to the complex I subunit 3 family.

The protein resides in the mitochondrion membrane. It catalyses the reaction a ubiquinone + NADH + 5 H(+)(in) = a ubiquinol + NAD(+) + 4 H(+)(out). Its function is as follows. Core subunit of the mitochondrial membrane respiratory chain NADH dehydrogenase (Complex I) that is believed to belong to the minimal assembly required for catalysis. Complex I functions in the transfer of electrons from NADH to the respiratory chain. The immediate electron acceptor for the enzyme is believed to be ubiquinone. This chain is NADH-ubiquinone oxidoreductase chain 3 (nad3), found in Dictyostelium citrinum (Slime mold).